Consider the following 238-residue polypeptide: 15,16-dihydrobiliverdin:ferredoxin oxidoreductase (238 aa).

The protein belongs to the HY2 family.

The enzyme catalyses 15,16-dihydrobiliverdin + oxidized 2[4Fe-4S]-[ferredoxin] = biliverdin IXalpha + reduced 2[4Fe-4S]-[ferredoxin] + 2 H(+). Catalyzes the two-electron reduction of biliverdin IX-alpha at the C15 methine bridge. In Prochlorococcus marinus (strain NATL2A), this protein is 15,16-dihydrobiliverdin:ferredoxin oxidoreductase.